Consider the following 335-residue polypeptide: Nod factor export ATP-binding protein I (335 aa).

The segment covering 1-10 (MTQEVPRRLE) has biased composition (basic and acidic residues). A disordered region spans residues 1–22 (MTQEVPRRLEPSPFEWKGDAGP). Residues 37-267 (IDLASVTKSY…KIGCQVIEIY (231 aa)) enclose the ABC transporter domain. An ATP-binding site is contributed by 69-76 (GPNGAGKS).

The protein belongs to the ABC transporter superfamily. Lipooligosaccharide exporter (TC 3.A.1.102) family. As to quaternary structure, the complex is composed of two ATP-binding proteins (NodI) and two transmembrane proteins (NodJ).

It is found in the cell inner membrane. Part of the ABC transporter complex NodIJ involved in the export of the nodulation factors (Nod factors), the bacterial signal molecules that induce symbiosis and subsequent nodulation induction. Nod factors are LCO (lipo-chitin oligosaccharide), a modified beta-1,4-linked N-acetylglucosamine oligosaccharide. This subunit is responsible for energy coupling to the transport system. This is Nod factor export ATP-binding protein I from Rhizobium meliloti (Ensifer meliloti).